The sequence spans 207 residues: High frequency lysogenization protein HflD homolog (207 aa).

This sequence belongs to the HflD family.

Its subcellular location is the cytoplasm. The protein resides in the cell inner membrane. This Tolumonas auensis (strain DSM 9187 / NBRC 110442 / TA 4) protein is High frequency lysogenization protein HflD homolog.